Reading from the N-terminus, the 337-residue chain is KEVENQQKLANVVILATGGTIAGAGASAANSATYQAAKVGVDKLIAGVPELADLANVRGEQVMQIASESITNDDLLKLGKRVAELADSNDVDGIVITHGTDTLEETAYFLDLTLNTDKPIVVVGSMRPGTAMSADGMLNLYNAVAVASNKDSRGKGVLVTMNDEIQSGRDVSKSINIKTEAFKSAWGPLGMVVEGKSYWFRLPAKRHTVNSEFDIKQISSLPQVDIAYSYGNVTDTAYKALAQNGAKALIHAGTGNGSVSSRLTPALQTLRKTGTQIIRSSHVNQGGFVLRNAEQPDDKNDWVVAHDLNPEKARILVELAMVKTQDSKELQRIFWEY.

An Asparaginase/glutaminase domain is found at 10–337 (ANVVILATGG…KELQRIFWEY (328 aa)). The Acyl-ester intermediate role is filled by Thr20. Residues Ser67 and 100-101 (TD) contribute to the substrate site.

The protein belongs to the asparaginase 1 family. As to quaternary structure, homotetramer.

The protein localises to the periplasm. The catalysed reaction is L-glutamine + H2O = L-glutamate + NH4(+). The enzyme catalyses L-asparagine + H2O = L-aspartate + NH4(+). This is Glutaminase-asparaginase (ansB) from Pseudomonas sp. (strain ATCC 29598 / 7A).